We begin with the raw amino-acid sequence, 340 residues long: 4-hydroxy-2-oxovalerate aldolase (340 aa).

In terms of domain architecture, Pyruvate carboxyltransferase spans 4-255; it reads VVIHDPTLRD…ATGIDLYALL (252 aa). 12-13 lines the substrate pocket; that stretch reads RD. Aspartate 13 is a binding site for Mn(2+). The active-site Proton acceptor is histidine 16. 2 residues coordinate substrate: serine 166 and histidine 194. Mn(2+) is bound by residues histidine 194 and histidine 196.

Belongs to the 4-hydroxy-2-oxovalerate aldolase family.

The catalysed reaction is (S)-4-hydroxy-2-oxopentanoate = acetaldehyde + pyruvate. The sequence is that of 4-hydroxy-2-oxovalerate aldolase from Streptomyces griseus subsp. griseus (strain JCM 4626 / CBS 651.72 / NBRC 13350 / KCC S-0626 / ISP 5235).